A 345-amino-acid polypeptide reads, in one-letter code: Phosphoribosylformylglycinamidine cyclo-ligase (345 aa).

The protein belongs to the AIR synthase family.

Its subcellular location is the cytoplasm. The catalysed reaction is 2-formamido-N(1)-(5-O-phospho-beta-D-ribosyl)acetamidine + ATP = 5-amino-1-(5-phospho-beta-D-ribosyl)imidazole + ADP + phosphate + H(+). Its pathway is purine metabolism; IMP biosynthesis via de novo pathway; 5-amino-1-(5-phospho-D-ribosyl)imidazole from N(2)-formyl-N(1)-(5-phospho-D-ribosyl)glycinamide: step 2/2. This chain is Phosphoribosylformylglycinamidine cyclo-ligase, found in Bifidobacterium longum (strain DJO10A).